Here is an 87-residue protein sequence, read N- to C-terminus: MSQVEFEMACASLKQLKGPVSDQEKLLVYSFYKQATQGDCNIPVPPATDVRAKAKYEAWMVNKGMSKMDAMRIYIAKVEELKKKEPC.

Residues serine 2–cysteine 87 form the ACB domain. An acyl-CoA is bound by residues tyrosine 29–lysine 33, lysine 55, and tyrosine 74.

The protein belongs to the ACBP family. Exclusively expressed in late spermatids and spermatozoa. Not found in epididymis, spleen, bone marrow, skin, liver, brain, heart, kidney, muscle.

It localises to the cytoplasm. May be involved in the energy metabolism of the mature sperm. This Mus musculus (Mouse) protein is Diazepam-binding inhibitor-like 5 (Dbil5).